A 255-amino-acid chain; its full sequence is tRNA (guanine-N(1)-)-methyltransferase (255 aa).

S-adenosyl-L-methionine contacts are provided by residues Gly113 and Ile133 to Leu138.

It belongs to the RNA methyltransferase TrmD family. Homodimer.

The protein localises to the cytoplasm. It catalyses the reaction guanosine(37) in tRNA + S-adenosyl-L-methionine = N(1)-methylguanosine(37) in tRNA + S-adenosyl-L-homocysteine + H(+). Its function is as follows. Specifically methylates guanosine-37 in various tRNAs. The chain is tRNA (guanine-N(1)-)-methyltransferase from Klebsiella pneumoniae subsp. pneumoniae (strain ATCC 700721 / MGH 78578).